Here is a 907-residue protein sequence, read N- to C-terminus: Protein translocase subunit SecA (907 aa).

ATP-binding positions include Gln87, 105 to 109, and Asp512; that span reads GEGKT. The interval 869 to 897 is disordered; sequence AESLSAHTPVVREGEKVGRNDPCPCGSGR. Positions 878–887 are enriched in basic and acidic residues; sequence VVREGEKVGR. The Zn(2+) site is built by Cys891, Cys893, Cys902, and His903.

Belongs to the SecA family. As to quaternary structure, monomer and homodimer. Part of the essential Sec protein translocation apparatus which comprises SecA, SecYEG and auxiliary proteins SecDF-YajC and YidC. The cofactor is Zn(2+).

Its subcellular location is the cell inner membrane. The protein localises to the cytoplasm. The catalysed reaction is ATP + H2O + cellular proteinSide 1 = ADP + phosphate + cellular proteinSide 2.. Its function is as follows. Part of the Sec protein translocase complex. Interacts with the SecYEG preprotein conducting channel. Has a central role in coupling the hydrolysis of ATP to the transfer of proteins into and across the cell membrane, serving both as a receptor for the preprotein-SecB complex and as an ATP-driven molecular motor driving the stepwise translocation of polypeptide chains across the membrane. This chain is Protein translocase subunit SecA, found in Shewanella sediminis (strain HAW-EB3).